Consider the following 383-residue polypeptide: Cobalt-precorrin-5B C(1)-methyltransferase (383 aa).

A disordered region spans residues 1 to 24; sequence MQPSARRPFDLATPAPNGLRRGRT.

It belongs to the CbiD family.

It catalyses the reaction Co-precorrin-5B + S-adenosyl-L-methionine = Co-precorrin-6A + S-adenosyl-L-homocysteine. The protein operates within cofactor biosynthesis; adenosylcobalamin biosynthesis; cob(II)yrinate a,c-diamide from sirohydrochlorin (anaerobic route): step 6/10. Functionally, catalyzes the methylation of C-1 in cobalt-precorrin-5B to form cobalt-precorrin-6A. The polypeptide is Cobalt-precorrin-5B C(1)-methyltransferase (Ralstonia nicotianae (strain ATCC BAA-1114 / GMI1000) (Ralstonia solanacearum)).